The following is a 122-amino-acid chain: Prefoldin subunit 1 (122 aa).

Ala-2 is modified (N-acetylalanine).

This sequence belongs to the prefoldin subunit beta family. In terms of assembly, heterohexamer of two PFD-alpha type and four PFD-beta type subunits.

Its function is as follows. Binds specifically to cytosolic chaperonin (c-CPN) and transfers target proteins to it. Binds to nascent polypeptide chain and promotes folding in an environment in which there are many competing pathways for nonnative proteins. The protein is Prefoldin subunit 1 (PFDN1) of Homo sapiens (Human).